We begin with the raw amino-acid sequence, 518 residues long: D-aminopeptidase (518 aa).

Catalysis depends on serine 62, which acts as the Nucleophile. The Proton donor/acceptor role is filled by lysine 65. Residues 477-487 (QRSMDAPSPGE) are important for specificity. Aspartate 481 is a binding site for substrate.

It belongs to the peptidase S12 family. As to quaternary structure, homodimer.

It carries out the reaction Release of an N-terminal D-amino acid from a peptide, Xaa-|-Yaa-, in which Xaa is preferably D-Ala, D-Ser or D-Thr. D-amino acid amides and methyl esters also are hydrolyzed, as is glycine amide.. With respect to regulation, inhibited by beta-lactam compounds such as 6-aminopenicillic acid, 7-aminocephalosporanic acid, benzylpenicillin and ampicillin. Inhibited by p-chloromercuribenzoate. Hydrolyzes N-terminal residues in D-amino acid-containing peptides. This Brucella abortus (strain S19) protein is D-aminopeptidase.